We begin with the raw amino-acid sequence, 814 residues long: G-type lectin S-receptor-like serine/threonine-protein kinase At1g61400 (814 aa).

The N-terminal stretch at 1–34 (MDFLFLLLERKNKHMGKKRVVLLWLSIFISFSSA) is a signal peptide. The region spanning 35–154 (EITEESPLSI…VSGRTLWESF (120 aa)) is the Bulb-type lectin domain. Topologically, residues 35 to 436 (EITEESPLSI…ELDVNKRKKT (402 aa)) are extracellular. Asparagine 63, asparagine 104, asparagine 127, and asparagine 246 each carry an N-linked (GlcNAc...) asparagine glycan. The region spanning 288–324 (PANSCDIYGVCGPFGFCVISVPPKCKCFKGFIPKSIE) is the EGF-like; atypical domain. Intrachain disulfides connect cysteine 292/cysteine 304 and cysteine 298/cysteine 312. Residues asparagine 330, asparagine 346, and asparagine 385 are each glycosylated (N-linked (GlcNAc...) asparagine). The PAN domain occupies 343–425 (CQGNSTGKDA…GELLSIRLAR (83 aa)). 2 disulfides stabilise this stretch: cysteine 378–cysteine 399 and cysteine 382–cysteine 388. A helical membrane pass occupies residues 437–457 (IIAITVSLTLFVILGFTAFGF). Topologically, residues 458-814 (WRRRVEQNAL…EMTESVIHGR (357 aa)) are cytoplasmic. A Protein kinase domain is found at 500 to 785 (FSLSNKLGHG…DLPLPKQPTF (286 aa)). Residues 506 to 514 (LGHGGFGSV) and lysine 528 contribute to the ATP site. Phosphoserine occurs at positions 534 and 549. The interval 589 to 606 (KKRLEIDWPKRFDIIQGI) is caM-binding. Aspartate 625 (proton acceptor) is an active-site residue. Serine 629 and serine 642 each carry phosphoserine. A Phosphothreonine modification is found at threonine 659. Phosphoserine occurs at positions 702 and 796.

Belongs to the protein kinase superfamily. Ser/Thr protein kinase family.

Its subcellular location is the cell membrane. The enzyme catalyses L-seryl-[protein] + ATP = O-phospho-L-seryl-[protein] + ADP + H(+). The catalysed reaction is L-threonyl-[protein] + ATP = O-phospho-L-threonyl-[protein] + ADP + H(+). This chain is G-type lectin S-receptor-like serine/threonine-protein kinase At1g61400, found in Arabidopsis thaliana (Mouse-ear cress).